Consider the following 100-residue polypeptide: Osteocalcin (100 aa).

An N-terminal signal peptide occupies residues 1–23 (MRALTLLALLALATLCITGQAGA). A propeptide spanning residues 24 to 51 (KPSGAESSKGAAFVSKQEGSEVVKRPRR) is cleaved from the precursor. The Gla domain occupies 52–98 (YLYQWLGAPAPYPDPLEPKREVCELNPDCDELADHIGFQEAYRRFYG). A 4-hydroxyproline modification is found at Pro-60. Ca(2+) contacts are provided by Glu-68, Glu-72, Glu-75, and Asp-81. Glu-68, Glu-72, and Glu-75 each carry 4-carboxyglutamate. The cysteines at positions 74 and 80 are disulfide-linked.

The protein belongs to the osteocalcin/matrix Gla protein family. Gamma-carboxyglutamate residues are formed by vitamin K dependent carboxylation by GGCX. These residues are essential for the binding of calcium. Decarboxylation promotes the hormone activity.

The protein resides in the secreted. Its function is as follows. The carboxylated form is one of the main organic components of the bone matrix, which constitutes 1-2% of the total bone protein: it acts as a negative regulator of bone formation and is required to limit bone formation without impairing bone resorption or mineralization. The carboxylated form binds strongly to apatite and calcium. The uncarboxylated form acts as a hormone secreted by osteoblasts, which regulates different cellular processes, such as energy metabolism, male fertility and brain development. Regulates of energy metabolism by acting as a hormone favoring pancreatic beta-cell proliferation, insulin secretion and sensitivity and energy expenditure. Uncarboxylated osteocalcin hormone also promotes testosterone production in the testes: acts as a ligand for G protein-coupled receptor GPRC6A at the surface of Leydig cells, initiating a signaling response that promotes the expression of enzymes required for testosterone synthesis in a CREB-dependent manner. Also acts as a regulator of brain development: osteocalcin hormone crosses the blood-brain barrier and acts as a ligand for GPR158 on neurons, initiating a signaling response that prevents neuronal apoptosis in the hippocampus, favors the synthesis of all monoamine neurotransmitters and inhibits that of gamma-aminobutyric acid (GABA). Osteocalcin also crosses the placenta during pregnancy and maternal osteocalcin is required for fetal brain development. This Macaca mulatta (Rhesus macaque) protein is Osteocalcin (BGLAP).